A 395-amino-acid polypeptide reads, in one-letter code: Tryptophan synthase beta chain (395 aa).

N6-(pyridoxal phosphate)lysine is present on Lys89.

This sequence belongs to the TrpB family. As to quaternary structure, tetramer of two alpha and two beta chains. Pyridoxal 5'-phosphate is required as a cofactor.

It catalyses the reaction (1S,2R)-1-C-(indol-3-yl)glycerol 3-phosphate + L-serine = D-glyceraldehyde 3-phosphate + L-tryptophan + H2O. It participates in amino-acid biosynthesis; L-tryptophan biosynthesis; L-tryptophan from chorismate: step 5/5. The beta subunit is responsible for the synthesis of L-tryptophan from indole and L-serine. This Fusobacterium nucleatum subsp. nucleatum (strain ATCC 25586 / DSM 15643 / BCRC 10681 / CIP 101130 / JCM 8532 / KCTC 2640 / LMG 13131 / VPI 4355) protein is Tryptophan synthase beta chain.